A 252-amino-acid polypeptide reads, in one-letter code: 5-oxoprolinase subunit A (252 aa).

Belongs to the LamB/PxpA family. Forms a complex composed of PxpA, PxpB and PxpC.

The catalysed reaction is 5-oxo-L-proline + ATP + 2 H2O = L-glutamate + ADP + phosphate + H(+). In terms of biological role, catalyzes the cleavage of 5-oxoproline to form L-glutamate coupled to the hydrolysis of ATP to ADP and inorganic phosphate. The protein is 5-oxoprolinase subunit A of Mycolicibacterium gilvum (strain PYR-GCK) (Mycobacterium gilvum (strain PYR-GCK)).